A 355-amino-acid polypeptide reads, in one-letter code: Uroporphyrinogen decarboxylase (355 aa).

Residues 27 to 31 (RQAGR), D78, Y155, S210, and H328 contribute to the substrate site.

It belongs to the uroporphyrinogen decarboxylase family. As to quaternary structure, homodimer.

It is found in the cytoplasm. The enzyme catalyses uroporphyrinogen III + 4 H(+) = coproporphyrinogen III + 4 CO2. The protein operates within porphyrin-containing compound metabolism; protoporphyrin-IX biosynthesis; coproporphyrinogen-III from 5-aminolevulinate: step 4/4. Catalyzes the decarboxylation of four acetate groups of uroporphyrinogen-III to yield coproporphyrinogen-III. The sequence is that of Uroporphyrinogen decarboxylase from Pseudomonas aeruginosa (strain LESB58).